The chain runs to 73 residues: DNA-binding protein S1FA3 (73 aa).

Positions 47 to 52 (PPRKKK) match the Nuclear localization signal motif. Positions 47 to 63 (PPRKKKPVSKKKMKKEK) are enriched in basic residues. The tract at residues 47-73 (PPRKKKPVSKKKMKKEKMKQGVQVPGE) is disordered.

The protein belongs to the S1FA transcription factor family.

Its subcellular location is the nucleus. DNA-binding protein that specifically recognizes a negative element (S1F) within the RPS1 promoter. The protein is DNA-binding protein S1FA3 (S1FA3) of Arabidopsis thaliana (Mouse-ear cress).